The primary structure comprises 189 residues: Interferon alpha-D (189 aa).

Residues 1–23 form the signal peptide; sequence MAPAWSLLLALLLLSCNAICSLG. 2 disulfide bridges follow: C24/C122 and C52/C162.

It belongs to the alpha/beta interferon family.

It localises to the secreted. In terms of biological role, produced by macrophages, IFN-alpha have antiviral activities. Interferon stimulates the production of two enzymes: a protein kinase and an oligoadenylate synthetase. In Bos taurus (Bovine), this protein is Interferon alpha-D (IFNAD).